Consider the following 253-residue polypeptide: Probable U3 small nucleolar RNA-associated protein 11 (253 aa).

The disordered stretch occupies residues methionine 1–lysine 26. Residues lysine 74, lysine 83, and lysine 86 each participate in a glycyl lysine isopeptide (Lys-Gly) (interchain with G-Cter in SUMO2) cross-link. Threonine 90 carries the phosphothreonine modification. Residues lysine 103, lysine 120, lysine 143, lysine 144, lysine 180, lysine 211, lysine 218, lysine 235, and lysine 236 each participate in a glycyl lysine isopeptide (Lys-Gly) (interchain with G-Cter in SUMO2) cross-link. At serine 241 the chain carries Phosphoserine. Residue lysine 246 forms a Glycyl lysine isopeptide (Lys-Gly) (interchain with G-Cter in SUMO2) linkage.

The protein belongs to the UTP11 family. As to quaternary structure, part of the small subunit (SSU) processome, composed of more than 70 proteins and the RNA chaperone small nucleolar RNA (snoRNA) U3.

The protein localises to the nucleus. It localises to the nucleolus. In terms of biological role, part of the small subunit (SSU) processome, first precursor of the small eukaryotic ribosomal subunit. During the assembly of the SSU processome in the nucleolus, many ribosome biogenesis factors, an RNA chaperone and ribosomal proteins associate with the nascent pre-rRNA and work in concert to generate RNA folding, modifications, rearrangements and cleavage as well as targeted degradation of pre-ribosomal RNA by the RNA exosome. Involved in nucleolar processing of pre-18S ribosomal RNA. This is Probable U3 small nucleolar RNA-associated protein 11 from Homo sapiens (Human).